Consider the following 857-residue polypeptide: Protein ARG5,6, mitochondrial (857 aa).

Residues 341 to 492 (INRNSLRDFG…FDSSSIGSSL (152 aa)) enclose the N-acetyltransferase domain. The segment at 509-532 (GFHHSTVRRNTNPNPPLSEGKQTE) is disordered. Cys-669 is an active-site residue.

The protein in the N-terminal section; belongs to the acetylglutamate kinase family. It in the C-terminal section; belongs to the NAGSA dehydrogenase family.

It is found in the mitochondrion. It carries out the reaction N-acetyl-L-glutamate 5-semialdehyde + phosphate + NADP(+) = N-acetyl-L-glutamyl 5-phosphate + NADPH + H(+). The enzyme catalyses N-acetyl-L-glutamate + ATP = N-acetyl-L-glutamyl 5-phosphate + ADP. It participates in amino-acid biosynthesis; L-arginine biosynthesis; N(2)-acetyl-L-ornithine from L-glutamate: step 2/4. Its pathway is amino-acid biosynthesis; L-arginine biosynthesis; N(2)-acetyl-L-ornithine from L-glutamate: step 3/4. This chain is Protein ARG5,6, mitochondrial (ARG5,6), found in Candida albicans (Yeast).